The primary structure comprises 95 residues: Aspartyl/glutamyl-tRNA(Asn/Gln) amidotransferase subunit C (95 aa).

The protein belongs to the GatC family. As to quaternary structure, heterotrimer of A, B and C subunits.

It catalyses the reaction L-glutamyl-tRNA(Gln) + L-glutamine + ATP + H2O = L-glutaminyl-tRNA(Gln) + L-glutamate + ADP + phosphate + H(+). It carries out the reaction L-aspartyl-tRNA(Asn) + L-glutamine + ATP + H2O = L-asparaginyl-tRNA(Asn) + L-glutamate + ADP + phosphate + 2 H(+). Functionally, allows the formation of correctly charged Asn-tRNA(Asn) or Gln-tRNA(Gln) through the transamidation of misacylated Asp-tRNA(Asn) or Glu-tRNA(Gln) in organisms which lack either or both of asparaginyl-tRNA or glutaminyl-tRNA synthetases. The reaction takes place in the presence of glutamine and ATP through an activated phospho-Asp-tRNA(Asn) or phospho-Glu-tRNA(Gln). The protein is Aspartyl/glutamyl-tRNA(Asn/Gln) amidotransferase subunit C of Methylobacterium sp. (strain 4-46).